The primary structure comprises 470 residues: Uronate isomerase (470 aa).

This sequence belongs to the metallo-dependent hydrolases superfamily. Uronate isomerase family.

It carries out the reaction D-glucuronate = D-fructuronate. The catalysed reaction is aldehydo-D-galacturonate = keto-D-tagaturonate. It functions in the pathway carbohydrate metabolism; pentose and glucuronate interconversion. The sequence is that of Uronate isomerase from Escherichia coli O17:K52:H18 (strain UMN026 / ExPEC).